The following is a 327-amino-acid chain: Biotin synthase (327 aa).

The 234-residue stretch at 49–282 folds into the Radical SAM core domain; sequence FNKEKIDLCS…KKVIRLCGGR (234 aa). 3 residues coordinate [4Fe-4S] cluster: cysteine 67, cysteine 71, and cysteine 74. Positions 110, 142, 201, and 277 each coordinate [2Fe-2S] cluster.

It belongs to the radical SAM superfamily. Biotin synthase family. In terms of assembly, homodimer. Requires [4Fe-4S] cluster as cofactor. The cofactor is [2Fe-2S] cluster.

It carries out the reaction (4R,5S)-dethiobiotin + (sulfur carrier)-SH + 2 reduced [2Fe-2S]-[ferredoxin] + 2 S-adenosyl-L-methionine = (sulfur carrier)-H + biotin + 2 5'-deoxyadenosine + 2 L-methionine + 2 oxidized [2Fe-2S]-[ferredoxin]. The protein operates within cofactor biosynthesis; biotin biosynthesis; biotin from 7,8-diaminononanoate: step 2/2. Functionally, catalyzes the conversion of dethiobiotin (DTB) to biotin by the insertion of a sulfur atom into dethiobiotin via a radical-based mechanism. The sequence is that of Biotin synthase from Methanococcus maripaludis (strain C7 / ATCC BAA-1331).